Here is a 307-residue protein sequence, read N- to C-terminus: Agmatinase (307 aa).

6 residues coordinate Mn(2+): His-128, Asp-151, His-153, Asp-155, Asp-232, and Asp-234.

It belongs to the arginase family. Agmatinase subfamily. Requires Mn(2+) as cofactor.

The catalysed reaction is agmatine + H2O = urea + putrescine. The protein operates within amine and polyamine biosynthesis; putrescine biosynthesis via agmatine pathway; putrescine from agmatine: step 1/1. Its function is as follows. Catalyzes the formation of putrescine from agmatine. The protein is Agmatinase of Neisseria meningitidis serogroup A / serotype 4A (strain DSM 15465 / Z2491).